A 368-amino-acid polypeptide reads, in one-letter code: Proton-coupled zinc antiporter SLC30A8 (368 aa).

Over 1–78 (MEFLERTYLV…AKWRLCAASA (78 aa)) the chain is Cytoplasmic. Zn(2+) contacts are provided by histidine 51, cysteine 52, and histidine 53. An HCH Motif; seals regulatory zinc-binding pocket motif is present at residues 51–53 (HCH). Residues 79 to 99 (ICFFFMVAEVVGGHVAGSLAV) traverse the membrane as a helical segment. Topologically, residues 100 to 102 (LTD) are lumenal, vesicle. Residues 103 to 123 (AAHLLIDLTSFLLSLFSLWLS) traverse the membrane as a helical segment. Zn(2+)-binding residues include histidine 105 and aspartate 109. Residues 124–139 (SRPPSKRLTFGWYRAE) are Cytoplasmic-facing. Residues 140–160 (ILGALLSVLCIWVVTGVLVYL) form a helical membrane-spanning segment. At 161 to 174 (ACERLLYPDYQIQA) the chain is on the lumenal, vesicle side. The chain crosses the membrane as a helical span at residues 175–195 (GIMITVSGCAVAANIVLTLIL). The Cytoplasmic segment spans residues 196–216 (HQRHLGHNHKDAQANASVRAA). A helical transmembrane segment spans residues 217-237 (FVHALGDVFQSTSVLISALII). Histidine 219 and aspartate 223 together coordinate Zn(2+). At 238-245 (YFKPDYKM) the chain is on the lumenal, vesicle side. Residues 246–266 (ADPVCTFISSVLALASTVMIL) form a helical membrane-spanning segment. At 267-368 (KDFSILLMEG…SCLLCEDPQD (102 aa)) the chain is on the cytoplasmic side. Residues histidine 300, histidine 317, histidine 344, glutamate 351, cysteine 360, and cysteine 363 each coordinate Zn(2+).

It belongs to the cation diffusion facilitator (CDF) transporter (TC 2.A.4) family. SLC30A subfamily. As to quaternary structure, homodimer. As to expression, expressed in endocrine pancreatic islet alpha and beta cells. May be more abundant in beta cells than in alpha cells. Expressed in cubical epithelium lining thyroid follicles (at protein level). In the adrenal gland, detected in the cortex, but not in the medulla (at protein level).

The protein localises to the cytoplasmic vesicle. The protein resides in the secretory vesicle membrane. It localises to the cell membrane. The catalysed reaction is Zn(2+)(in) + 2 H(+)(out) = Zn(2+)(out) + 2 H(+)(in). In terms of biological role, proton-coupled zinc ion antiporter mediating the entry of zinc into the lumen of pancreatic beta cell secretory granules, thereby regulating insulin secretion. This Rattus norvegicus (Rat) protein is Proton-coupled zinc antiporter SLC30A8.